The following is a 348-amino-acid chain: Killer cell immunoglobulin-like receptor 2DL2 (348 aa).

The first 21 residues, 1–21 (MSLMVVSMACVGFFLLQGAWP), serve as a signal peptide directing secretion. Over 22–245 (HEGVHRKPSL…SKTGNPRHLH (224 aa)) the chain is Extracellular. Ig-like C2-type domains follow at residues 42–107 (EETV…VTHS) and 142–205 (GESV…FRDS). 2 disulfides stabilise this stretch: cysteine 49-cysteine 100 and cysteine 149-cysteine 198. 3 N-linked (GlcNAc...) asparagine glycosylation sites follow: asparagine 84, asparagine 178, and asparagine 211. A helical membrane pass occupies residues 246–264 (ILIGTSVVIILFILLFFLL). Over 265 to 348 (HRWCSNKKNA…ESRSKVVSCP (84 aa)) the chain is Cytoplasmic.

The protein belongs to the immunoglobulin superfamily.

Its subcellular location is the cell membrane. In terms of biological role, receptor on natural killer (NK) cells for HLA-Cw1, 3, 7, and 8 allotypes. Inhibits the activity of NK cells thus preventing cell lysis. This is Killer cell immunoglobulin-like receptor 2DL2 from Homo sapiens (Human).